Here is a 190-residue protein sequence, read N- to C-terminus: Small ribosomal subunit protein uS5 (190 aa).

In terms of domain architecture, S5 DRBM spans 21-84; it reads FADRLVAINR…EQAKRQMIRV (64 aa). Residues 156–190 are disordered; it reads KKEQSPRSVAQRRGKKVADILPKRDEAPAAEAAEA. Positions 171–182 are enriched in basic and acidic residues; that stretch reads KVADILPKRDEA.

Belongs to the universal ribosomal protein uS5 family. Part of the 30S ribosomal subunit. Contacts proteins S4 and S8.

With S4 and S12 plays an important role in translational accuracy. Functionally, located at the back of the 30S subunit body where it stabilizes the conformation of the head with respect to the body. The sequence is that of Small ribosomal subunit protein uS5 from Ruegeria pomeroyi (strain ATCC 700808 / DSM 15171 / DSS-3) (Silicibacter pomeroyi).